Here is a 176-residue protein sequence, read N- to C-terminus: Small ribosomal subunit protein uS5c (176 aa).

Positions L26 to L89 constitute an S5 DRBM domain.

This sequence belongs to the universal ribosomal protein uS5 family. As to quaternary structure, part of the 30S ribosomal subunit. Contacts protein S4.

It is found in the plastid. The protein localises to the chloroplast. In terms of biological role, with S4 and S12 plays an important role in translational accuracy. The chain is Small ribosomal subunit protein uS5c (rps5) from Phaeodactylum tricornutum (strain CCAP 1055/1).